Consider the following 495-residue polypeptide: Syntaphilin (495 aa).

Residues 1–74 form a disordered region; it reads MAMSLQGSRR…HGIKPPTPEQ (74 aa). The span at 7–49 shows a compositional bias: low complexity; sequence GSRRASAGSRRRTSPPVSVRDAYGTSSLSSSSNSGSCKGSDSS. Residues 79–161 are a coiled coil; the sequence is LQQKEVCIRH…VKNNLIDKDK (83 aa). Residues 191-244 form a disordered region; it reads VAKEEGTGESAGGSPARSLTRSSTYTKLSDPAVCGDRQPGDPSNTSAEDGADSG. 2 positions are modified to phosphoserine: Ser200 and Ser204. Over residues 207–217 the composition is skewed to polar residues; it reads RSLTRSSTYTK. Residue Thr214 is modified to Phosphothreonine. Residue Ser219 is modified to Phosphoserine. Position 235 is a phosphothreonine (Thr235). Residues 427–446 form a helical membrane-spanning segment; the sequence is YIVDLLAVVVPAVPTVAWLC.

Binds to STX1A. Interacts with DNM1; this interaction inhibits the binding of DNM1 to AMPH and DNM1-receptor-mediated endocytosis.

The protein resides in the membrane. It localises to the synapse. The protein localises to the synaptosome. Inhibits SNARE complex formation by absorbing free STX1A. The chain is Syntaphilin from Mus musculus (Mouse).